The sequence spans 158 residues: Lectin-like protein EP153R (158 aa).

Residues 1-26 (MFLNKKYPSLIEKKMDDLMTLKFCYL) lie on the Cytoplasmic side of the membrane. A helical transmembrane segment spans residues 27 to 47 (IITFLIITNIFSLAINIWGGG). Topologically, residues 48–158 (DMIDRQSCEN…YTETFFICSN (111 aa)) are extracellular. Residues cysteine 61 and cysteine 72 are joined by a disulfide bond. The tract at residues 61 to 157 (CPKDWVGYNN…KYTETFFICS (97 aa)) is lectin-like. 7 N-linked (GlcNAc...) asparagine; by host glycosylation sites follow: asparagine 81, asparagine 94, asparagine 100, asparagine 106, asparagine 112, asparagine 119, and asparagine 139.

It belongs to the asfivirus lectin-like protein family. Homodimer.

The protein localises to the host endoplasmic reticulum membrane. Down-regulates MHC-I expression by impairing the appropriate configuration or presentation into the plasma membrane of the latter. Participates in viral hemadsorption, which may help viral spread. Reduces the transactivating activity of host TP53, thus inhibiting apoptosis. Non-essential for virus growth in swine macrophage cell cultures. The protein is Lectin-like protein EP153R of African swine fever virus (isolate Pig/Kenya/KEN-50/1950) (ASFV).